The sequence spans 360 residues: GDSL esterase/lipase At2g31550 (360 aa).

An N-terminal signal peptide occupies residues 1–27; that stretch reads MSTSKAITLTLFITTTLLASCDAAANA. N-linked (GlcNAc...) asparagine glycosylation occurs at Asn-26. Residue Ser-42 is the Nucleophile of the active site. N-linked (GlcNAc...) asparagine glycosylation is found at Asn-104 and Asn-326. Catalysis depends on residues Asp-334 and His-337.

It belongs to the 'GDSL' lipolytic enzyme family.

It localises to the secreted. In Arabidopsis thaliana (Mouse-ear cress), this protein is GDSL esterase/lipase At2g31550.